The primary structure comprises 122 residues: UPF0102 protein R00337 (122 aa).

This sequence belongs to the UPF0102 family.

This Rhizobium meliloti (strain 1021) (Ensifer meliloti) protein is UPF0102 protein R00337.